We begin with the raw amino-acid sequence, 1249 residues long: Apoptotic protease-activating factor 1 (1249 aa).

Positions 1–90 (MDAKARNCLL…KDLAGLLHSG (90 aa)) constitute a CARD domain. The 310-residue stretch at 106 to 415 (NTSFVRTVLC…LETEEVEDIL (310 aa)) folds into the NB-ARC domain. ATP contacts are provided by residues 154–161 (GMAGCGKS) and R265. The WD 1-1 repeat unit spans residues 613 to 652 (PHTDAVYHACFSQDGQRIASCGADKTLQVFKAETGEKLLD). The WD 1-2 repeat unit spans residues 655–694 (AHEDEVLCCAFSSDDSYIATCSVDKKVKIWDSGTGKLVHT). The WD 1-3 repeat unit spans residues 697–738 (EHSEQVNCCHFTNKSNHLLLATGSNDSFLKLWDLNQKECRNT). The WD 1-4 repeat unit spans residues 741–780 (GHTNSVTHCRFSPDDELLASCSADGTLKLWDVRSANEKKS). A WD 1-5 repeat occupies 796–837 (DVEVIVKCCSWSADGDRIIVAAKNKVLLLDIHTSGLLTEIHT). The stretch at 838–877 (GHHSTIQYCDFSPYDHLAVIALSQYCVELWNIDSRVKVAD) is one WD 1-6 repeat. The stretch at 880 to 910 (GHLSWVHGVMFSPDGSSFLTASDDQTIRVWE) is one WD 1-7 repeat. Positions 910-921 (ETRKVCKNSAIV) are interpropeller linker. Residues 922 to 958 (LKQEIDVVFQENEMMVLAVDNIRGLQLIAGKTGQIDY) form a WD 2-1 repeat. One copy of the WD 2-2 repeat lies at 959 to 998 (LPEAQVSCCCLSPHLEYVAFGDEEGAIKIIELPNNRVFSS). The stretch at 1001–1040 (GHKKAVRHIQFTADGKTLISSSEDSVIQVWNWQTEEYVFL) is one WD 2-3 repeat. The stretch at 1042–1080 (AHQETVKDFRLLRDSRLLSWSFDGTVKVWNVITGRIERD) is one WD 2-4 repeat. The WD 2-5 repeat unit spans residues 1083-1122 (CHQGTVLSCAISSDATKFSSTSADKTAKIWSFELPSPLHE). A WD 2-6 repeat occupies 1125–1164 (GHNSCVRCSAFSLDGILLATGDDNGEIRIWNVSDGQLLHL). A WD 2-7 repeat occupies 1176–1213 (THGGWVTDVCFSPDRKMLVSAGGYLKWWNVVTGESSQT). The WD 2-8 repeat unit spans residues 1214–1249 (FYTNGTNLKKIHVSPDFRTYVTVDNLGILYILQVLE).

Monomer. Oligomerizes to a heptameric ring, known as the apoptosome, upon binding of cytochrome c and dATP. Oligomeric Apaf-1 and pro-caspase-9 bind to each other via their respective NH2-terminal CARD domains. Interacts with UACA. Interacts with APIP. Interacts (via CARD and NACHT domains) with NAIP/BIRC1 (via NACHT domain). Interacts with CIAO2A.

The protein localises to the cytoplasm. Functionally, regulates programmed cell death; necessary for normal brain development. Participates with pro-caspase-9 (Apaf-3) in the cytochrome c-dependent activation of caspase-3, leading to apoptosis. This activation requires ATP. The sequence is that of Apoptotic protease-activating factor 1 (Apaf1) from Rattus norvegicus (Rat).